The following is a 253-amino-acid chain: tRNA pseudouridine synthase A (253 aa).

The Nucleophile role is filled by Asp-53. Tyr-111 is a substrate binding site.

Belongs to the tRNA pseudouridine synthase TruA family. As to quaternary structure, homodimer.

It catalyses the reaction uridine(38/39/40) in tRNA = pseudouridine(38/39/40) in tRNA. Formation of pseudouridine at positions 38, 39 and 40 in the anticodon stem and loop of transfer RNAs. This is tRNA pseudouridine synthase A from Oceanobacillus iheyensis (strain DSM 14371 / CIP 107618 / JCM 11309 / KCTC 3954 / HTE831).